The primary structure comprises 480 residues: Voltage-gated potassium channel regulatory subunit KCNG2 (480 aa).

Disordered regions lie at residues 1 to 25 and 144 to 167; these read MARLPGHPEVPGAEPGSAVRGGRGG and AAEARATPPARGPQTSPGRALGSG. At 1–187 the chain is on the cytoplasmic side; it reads MARLPGHPEV…DVVENPHSGL (187 aa). Residues 188–209 form a helical membrane-spanning segment; that stretch reads AGKLFAYVSVAFVAVTAVGLCL. Residues 210–230 are Extracellular-facing; sequence STMPDVRAEEERGECSTKCRN. Residues 231–252 traverse the membrane as a helical segment; sequence LFVLETVCVAWFSFEFLLRSLQ. At 253 to 263 the chain is on the cytoplasmic side; it reads AESKCAFLRTP. A helical membrane pass occupies residues 264–284; the sequence is LAIIDILAILPFYVSLLAGLA. At 285 to 296 the chain is on the extracellular side; it reads AGPTGSKMLERA. Residues 297–317 traverse the membrane as a helical; Voltage-sensor segment; that stretch reads GLVLRLLRALRVLYVMRLARH. Topologically, residues 318-332 are cytoplasmic; that stretch reads SLGLRSLGLTVRRCA. A helical membrane pass occupies residues 333-354; it reads REFGLLLLFLCVAMALFAPLVH. At 355-369 the chain is on the extracellular side; it reads LAERELGAHRDFSSV. An intramembrane region (helical) is located at residues 370–381; it reads PASYWWAVISMT. The Selectivity filter motif lies at 382–387; it reads TVGYGD. Residues 382–389 lie within the membrane without spanning it; sequence TVGYGDMV. The Extracellular portion of the chain corresponds to 390–396; sequence PRSLPGQ. The chain crosses the membrane as a helical span at residues 397 to 425; sequence VVALSSILSGILLMAFPVTSIFHTFSRSY. At 426 to 480 the chain is on the cytoplasmic side; sequence SELKEQQQRAASPEPVLREDSTRDDSTRSASATEDSSQDPETAGAAGSLPGPVGP. A disordered region spans residues 429–480; sequence KEQQQRAASPEPVLREDSTRDDSTRSASATEDSSQDPETAGAAGSLPGPVGP. Basic and acidic residues predominate over residues 441–452; the sequence is VLREDSTRDDST.

It belongs to the potassium channel family. G (TC 1.A.1.2) subfamily. Kv6.2/KCNG2 sub-subfamily. Heterodimer with KCNB1. As to expression, highly expressed in heart, in particular in right and left atrium, and detected at lower levels in the right and left ventricle.

The protein resides in the cell membrane. Functionally, regulatory alpha-subunit of the voltage-gated potassium (Kv) channel which, when coassembled with KCNB1, can modulate the kinetics and conductance-voltage relationship. Modulates channel activity by shifting the threshold and the half-maximal activation to more negative values. Potassium channel subunit that does not form functional channels by itself. This Rattus norvegicus (Rat) protein is Voltage-gated potassium channel regulatory subunit KCNG2.